A 270-amino-acid chain; its full sequence is Putative pyruvate, phosphate dikinase regulatory protein (270 aa).

151-158 (GVSRTSKT) is a binding site for ADP.

The protein belongs to the pyruvate, phosphate/water dikinase regulatory protein family. PDRP subfamily.

The catalysed reaction is N(tele)-phospho-L-histidyl/L-threonyl-[pyruvate, phosphate dikinase] + ADP = N(tele)-phospho-L-histidyl/O-phospho-L-threonyl-[pyruvate, phosphate dikinase] + AMP + H(+). It catalyses the reaction N(tele)-phospho-L-histidyl/O-phospho-L-threonyl-[pyruvate, phosphate dikinase] + phosphate + H(+) = N(tele)-phospho-L-histidyl/L-threonyl-[pyruvate, phosphate dikinase] + diphosphate. Its function is as follows. Bifunctional serine/threonine kinase and phosphorylase involved in the regulation of the pyruvate, phosphate dikinase (PPDK) by catalyzing its phosphorylation/dephosphorylation. The chain is Putative pyruvate, phosphate dikinase regulatory protein from Streptococcus gordonii (strain Challis / ATCC 35105 / BCRC 15272 / CH1 / DL1 / V288).